A 439-amino-acid polypeptide reads, in one-letter code: Elongation factor 1-alpha 2 (439 aa).

In terms of domain architecture, tr-type G spans lysine 6–isoleucine 229. Residues glycine 15 to serine 22 are G1. Residue glycine 15–serine 22 participates in GTP binding. The interval glycine 71 to asparagine 75 is G2. The tract at residues aspartate 92–glycine 95 is G3. GTP is bound by residues aspartate 92–histidine 96 and asparagine 154–aspartate 157. The G4 stretch occupies residues asparagine 154–aspartate 157. The tract at residues serine 193–phenylalanine 195 is G5.

Belongs to the TRAFAC class translation factor GTPase superfamily. Classic translation factor GTPase family. EF-Tu/EF-1A subfamily.

The protein resides in the cytoplasm. In terms of biological role, this protein promotes the GTP-dependent binding of aminoacyl-tRNA to the A-site of ribosomes during protein biosynthesis. The polypeptide is Elongation factor 1-alpha 2 (EFA2) (Euplotes crassus).